Consider the following 110-residue polypeptide: Large ribosomal subunit protein uL22 (110 aa).

Residues 85-95 show a composition bias toward basic residues; that stretch reads RGTASKIRKPT. Positions 85-110 are disordered; that stretch reads RGTASKIRKPTSHVMVEVSKAQKKEA.

It belongs to the universal ribosomal protein uL22 family. Part of the 50S ribosomal subunit.

In terms of biological role, this protein binds specifically to 23S rRNA; its binding is stimulated by other ribosomal proteins, e.g. L4, L17, and L20. It is important during the early stages of 50S assembly. It makes multiple contacts with different domains of the 23S rRNA in the assembled 50S subunit and ribosome. The globular domain of the protein is located near the polypeptide exit tunnel on the outside of the subunit, while an extended beta-hairpin is found that lines the wall of the exit tunnel in the center of the 70S ribosome. This is Large ribosomal subunit protein uL22 from Campylobacter curvus (strain 525.92).